Consider the following 843-residue polypeptide: Glycogen phosphorylase, brain form (843 aa).

Ala-2 is subject to N-acetylalanine. Ser-15 is modified (phosphoserine; by PHK; in form phosphorylase A). AMP-binding residues include Asp-43, Tyr-197, and Arg-310. Position 197 is a phosphotyrosine (Tyr-197). Tyr-473 carries the post-translational modification Phosphotyrosine. A Phosphoserine modification is found at Ser-524. Residue Lys-569 coordinates pyridoxal 5'-phosphate. A pyridoxal 5'-phosphate region spans residues 677–678 (TG). Lys-681 carries the N6-(pyridoxal phosphate)lysine modification.

The protein belongs to the glycogen phosphorylase family. In terms of assembly, homodimer. Dimers associate into a tetramer to form the enzymatically active phosphorylase A. Pyridoxal 5'-phosphate is required as a cofactor. Post-translationally, phosphorylation of Ser-15 converts phosphorylase B (unphosphorylated) to phosphorylase A.

It catalyses the reaction [(1-&gt;4)-alpha-D-glucosyl](n) + phosphate = [(1-&gt;4)-alpha-D-glucosyl](n-1) + alpha-D-glucose 1-phosphate. Its activity is regulated as follows. Activity of phosphorylase is controlled both by allosteric means (through the non-covalent binding of metabolites) and by covalent modification. Thus AMP allosterically activates, whereas ATP, ADP, and glucose-6-phosphate allosterically inhibit, phosphorylase B. Functionally, glycogen phosphorylase that regulates glycogen mobilization. Phosphorylase is an important allosteric enzyme in carbohydrate metabolism. Enzymes from different sources differ in their regulatory mechanisms and in their natural substrates. However, all known phosphorylases share catalytic and structural properties. This chain is Glycogen phosphorylase, brain form (Pygb), found in Mus musculus (Mouse).